Consider the following 289-residue polypeptide: Oxaloacetate decarboxylase (289 aa).

Serine 47 serves as a coordination point for substrate. Aspartate 85 is a binding site for Mg(2+). The substrate site is built by arginine 156 and histidine 232.

This sequence belongs to the isocitrate lyase/PEP mutase superfamily. Oxaloacetate decarboxylase family. As to quaternary structure, homotetramer; dimer of dimers. It depends on Mg(2+) as a cofactor.

It carries out the reaction oxaloacetate + H(+) = pyruvate + CO2. In terms of biological role, catalyzes the decarboxylation of oxaloacetate into pyruvate. Seems to play a role in maintaining cellular concentrations of bicarbonate and pyruvate. The protein is Oxaloacetate decarboxylase of Rhodopseudomonas palustris (strain BisB5).